Reading from the N-terminus, the 304-residue chain is Type II methyltransferase M.HindV (304 aa).

The SAM-dependent MTase C5-type domain maps to 1–299 (MKCVDLFSGC…SAIINFEKEP (299 aa)). Residue Cys-75 is part of the active site.

This sequence belongs to the class I-like SAM-binding methyltransferase superfamily. C5-methyltransferase family.

It carries out the reaction a 2'-deoxycytidine in DNA + S-adenosyl-L-methionine = a 5-methyl-2'-deoxycytidine in DNA + S-adenosyl-L-homocysteine + H(+). A methylase, recognizes the double-stranded sequence 5'-GRCGYC-3', methylates C-? on both strands, and protects the DNA from cleavage by the HindV endonuclease. This chain is Type II methyltransferase M.HindV (hindVM), found in Haemophilus influenzae (strain ATCC 51907 / DSM 11121 / KW20 / Rd).